We begin with the raw amino-acid sequence, 381 residues long: Terpene cyclase ATR13 (381 aa).

It belongs to the terpene synthase family.

Its pathway is mycotoxin biosynthesis. Functionally, terpene cyclase; part of the core atranone cluster (CAC) which products are predicted to catalyze most or all steps of mycotoxin atranone synthesis, starting from geranylgeranyl pyrophosphate (GGPP). The initial cyclization of GGPP to dolabellane is probably performed by the terpene cyclase ATR13. The Baeyer-Villiger oxidation near the end of the atranone synthesis, which converts atranones D and E to atranones F and G is predicted to be catalyzed by the monooxygenase ATR8. Of the CAC's other predicted gene products, the reducing PKS ATR6 might synthesize a polyketide chain. This polyketide is probably transferred onto the atranone backbone by the polyketide transferase ATR5. Other predicted CAC products include 4 oxygenases (ATR2, ATR3, ATR4, and ATR14), 3 short-chain reductases (ATR7, ATR9, and ATR10), and a methyltransferase (ATR12). These may all be involved in the various steps of atranone biosynthesis, although their specific roles must await experimental determination. The sequence is that of Terpene cyclase ATR13 from Stachybotrys chlorohalonatus (strain IBT 40285).